Here is a 239-residue protein sequence, read N- to C-terminus: Outer membrane protein PagN (239 aa).

The first 22 residues, 1 to 22, serve as a signal peptide directing secretion; that stretch reads MKNFFAVCIIPLVVAWSATASA. At 23 to 26 the chain is on the periplasmic side; the sequence is KEGI. A beta stranded membrane pass occupies residues 27–36; sequence YITGKAGTSV. Topologically, residues 37–65 are extracellular; it reads VNVYGINSTFSQDEIVNGHATLPDRTKGV. A beta stranded membrane pass occupies residues 66–76; that stretch reads FGGGVAIGYDF. The Periplasmic segment spans residues 77 to 81; sequence YDPFQ. A beta stranded membrane pass occupies residues 82–92; that stretch reads LPVRLELDTTF. Residues 93–120 lie on the Extracellular side of the membrane; that stretch reads RGETDAKGGQDIIAFGDPVHINVKNQVR. A beta stranded transmembrane segment spans residues 121 to 132; sequence MTTYMVNGYYDF. Over 133–137 the chain is Periplasmic; the sequence is HNSTA. A beta stranded transmembrane segment spans residues 138–148; sequence FTPYISAGVGL. Residues 149–174 are Extracellular-facing; that stretch reads AHVKLSNNTIPVGFGINETLSASKNN. A beta stranded membrane pass occupies residues 175–185; it reads FAWGAGIGAKY. Over 186–190 the chain is Periplasmic; that stretch reads AVTDN. The beta stranded transmembrane segment at 191 to 200 threads the bilayer; sequence IMIDASYKYI. The Extracellular portion of the chain corresponds to 201 to 230; it reads NAGKVSISKNHYAGDEHTAYDADTKAASND. Residues 231 to 239 form a beta stranded membrane-spanning segment; the sequence is FMLGITYAF.

The protein resides in the cell outer membrane. Its function is as follows. Haemagglutinin that facilitates the adhesion to and invasion of epithelial mammalian cells. Utilizes heparinated proteoglycan as a receptor to successfully invade host cells. In Salmonella typhimurium (strain LT2 / SGSC1412 / ATCC 700720), this protein is Outer membrane protein PagN (pagN).